Consider the following 738-residue polypeptide: Phosphoribosylformylglycinamidine synthase subunit PurL (738 aa).

Histidine 53 is a catalytic residue. ATP contacts are provided by tyrosine 56 and lysine 95. Glutamate 97 contributes to the Mg(2+) binding site. Substrate-binding positions include 98 to 101 and arginine 120; that span reads SHNH. Histidine 99 functions as the Proton acceptor in the catalytic mechanism. A Mg(2+)-binding site is contributed by aspartate 121. Glutamine 244 contacts substrate. Residue aspartate 274 participates in Mg(2+) binding. Substrate is bound at residue 318–320; the sequence is ESQ. ATP-binding residues include aspartate 499 and glycine 536. Position 537 (asparagine 537) interacts with Mg(2+). Residue serine 539 participates in substrate binding.

It belongs to the FGAMS family. In terms of assembly, monomer. Part of the FGAM synthase complex composed of 1 PurL, 1 PurQ and 2 PurS subunits.

Its subcellular location is the cytoplasm. It catalyses the reaction N(2)-formyl-N(1)-(5-phospho-beta-D-ribosyl)glycinamide + L-glutamine + ATP + H2O = 2-formamido-N(1)-(5-O-phospho-beta-D-ribosyl)acetamidine + L-glutamate + ADP + phosphate + H(+). It participates in purine metabolism; IMP biosynthesis via de novo pathway; 5-amino-1-(5-phospho-D-ribosyl)imidazole from N(2)-formyl-N(1)-(5-phospho-D-ribosyl)glycinamide: step 1/2. Its function is as follows. Part of the phosphoribosylformylglycinamidine synthase complex involved in the purines biosynthetic pathway. Catalyzes the ATP-dependent conversion of formylglycinamide ribonucleotide (FGAR) and glutamine to yield formylglycinamidine ribonucleotide (FGAM) and glutamate. The FGAM synthase complex is composed of three subunits. PurQ produces an ammonia molecule by converting glutamine to glutamate. PurL transfers the ammonia molecule to FGAR to form FGAM in an ATP-dependent manner. PurS interacts with PurQ and PurL and is thought to assist in the transfer of the ammonia molecule from PurQ to PurL. In Lacticaseibacillus paracasei (strain ATCC 334 / BCRC 17002 / CCUG 31169 / CIP 107868 / KCTC 3260 / NRRL B-441) (Lactobacillus paracasei), this protein is Phosphoribosylformylglycinamidine synthase subunit PurL.